The sequence spans 177 residues: Adenine phosphoribosyltransferase (177 aa).

The protein belongs to the purine/pyrimidine phosphoribosyltransferase family. Homodimer.

It is found in the cytoplasm. It catalyses the reaction AMP + diphosphate = 5-phospho-alpha-D-ribose 1-diphosphate + adenine. The protein operates within purine metabolism; AMP biosynthesis via salvage pathway; AMP from adenine: step 1/1. Its function is as follows. Catalyzes a salvage reaction resulting in the formation of AMP, that is energically less costly than de novo synthesis. The protein is Adenine phosphoribosyltransferase of Chlorobaculum tepidum (strain ATCC 49652 / DSM 12025 / NBRC 103806 / TLS) (Chlorobium tepidum).